The chain runs to 502 residues: Probable cytosol aminopeptidase (502 aa).

Residues lysine 269 and aspartate 274 each coordinate Mn(2+). Lysine 281 is a catalytic residue. Mn(2+)-binding residues include aspartate 292, aspartate 351, and glutamate 353. Arginine 355 is a catalytic residue.

Belongs to the peptidase M17 family. Mn(2+) is required as a cofactor.

It is found in the cytoplasm. It catalyses the reaction Release of an N-terminal amino acid, Xaa-|-Yaa-, in which Xaa is preferably Leu, but may be other amino acids including Pro although not Arg or Lys, and Yaa may be Pro. Amino acid amides and methyl esters are also readily hydrolyzed, but rates on arylamides are exceedingly low.. It carries out the reaction Release of an N-terminal amino acid, preferentially leucine, but not glutamic or aspartic acids.. Presumably involved in the processing and regular turnover of intracellular proteins. Catalyzes the removal of unsubstituted N-terminal amino acids from various peptides. In Vibrio campbellii (strain ATCC BAA-1116), this protein is Probable cytosol aminopeptidase.